The chain runs to 714 residues: Fatty acid oxidation complex subunit alpha (714 aa).

The enoyl-CoA hydratase stretch occupies residues 1-190 (MEMASAFTLN…KLGLVDDVVP (190 aa)). Positions 306 to 714 (APLNSVGILG…FWKTTATDLQ (409 aa)) are 3-hydroxyacyl-CoA dehydrogenase.

This sequence in the N-terminal section; belongs to the enoyl-CoA hydratase/isomerase family. The protein in the central section; belongs to the 3-hydroxyacyl-CoA dehydrogenase family. Heterotetramer of two alpha chains (FadJ) and two beta chains (FadI).

The protein localises to the cytoplasm. It carries out the reaction a (3S)-3-hydroxyacyl-CoA = a (2E)-enoyl-CoA + H2O. The enzyme catalyses a 4-saturated-(3S)-3-hydroxyacyl-CoA = a (3E)-enoyl-CoA + H2O. It catalyses the reaction a (3S)-3-hydroxyacyl-CoA + NAD(+) = a 3-oxoacyl-CoA + NADH + H(+). The catalysed reaction is (3S)-3-hydroxybutanoyl-CoA = (3R)-3-hydroxybutanoyl-CoA. The protein operates within lipid metabolism; fatty acid beta-oxidation. Functionally, catalyzes the formation of a hydroxyacyl-CoA by addition of water on enoyl-CoA. Also exhibits 3-hydroxyacyl-CoA epimerase and 3-hydroxyacyl-CoA dehydrogenase activities. This Shigella boydii serotype 4 (strain Sb227) protein is Fatty acid oxidation complex subunit alpha.